The sequence spans 469 residues: Properdin (469 aa).

The signal sequence occupies residues 1-27; the sequence is MITEGAQAPRLLLPPLLLLLTLPATGS. 7 consecutive TSP type-1 domains span residues 28–76, 77–134, 136–191, 193–255, 257–313, 315–377, and 379–462; these read DPVL…QPCR, SPRW…QCCP, MGGW…QVCP, HGAW…PPCP, AGGW…VPCP, DGEW…QHCP, and KGSW…PACK. Cystine bridges form between cysteine 32-cysteine 56, cysteine 43-cysteine 72, and cysteine 57-cysteine 75. C-linked (Man) tryptophan glycosylation is found at tryptophan 83 and tryptophan 86. 7 cysteine pairs are disulfide-bonded: cysteine 89–cysteine 127, cysteine 93–cysteine 133, cysteine 104–cysteine 111, cysteine 132–cysteine 170, cysteine 148–cysteine 184, cysteine 152–cysteine 190, and cysteine 163–cysteine 174. Threonine 92 carries an O-linked (Fuc...) threonine glycan. 3 C-linked (Man) tryptophan glycosylation sites follow: tryptophan 139, tryptophan 142, and tryptophan 145. O-linked (Fuc...) threonine glycosylation occurs at threonine 151. 3 C-linked (Man) tryptophan glycosylation sites follow: tryptophan 196, tryptophan 199, and tryptophan 202. 3 disulfides stabilise this stretch: cysteine 205–cysteine 248, cysteine 209–cysteine 254, and cysteine 224–cysteine 238. A glycan (O-linked (Fuc...) serine) is linked at serine 208. The segment at 219–238 is disordered; that stretch reads TRSRKCSAPEPSQKPPGKPC. Residues tryptophan 260 and tryptophan 263 are each glycosylated (C-linked (Man) tryptophan). 3 disulfide bridges follow: cysteine 269-cysteine 306, cysteine 273-cysteine 312, and cysteine 284-cysteine 296. Threonine 272 is a glycosylation site (O-linked (Fuc...) threonine). Tryptophan 321 and tryptophan 324 each carry a C-linked (Man) tryptophan glycan. 3 disulfides stabilise this stretch: cysteine 327–cysteine 370, cysteine 337–cysteine 376, and cysteine 350–cysteine 360. The segment at 351–359 is interaction with Complement C3 beta chain; that stretch reads RGRKFDGHR. C-linked (Man) tryptophan glycans are attached at residues tryptophan 382, tryptophan 385, and tryptophan 388. 3 cysteine pairs are disulfide-bonded: cysteine 391/cysteine 455, cysteine 395/cysteine 461, and cysteine 407/cysteine 439. An N-linked (GlcNAc...) (complex) asparagine glycan is attached at asparagine 428.

In terms of assembly, in plasma, properdin exists as dimers, trimers or tetramers in the relative proportions of 26:54:20. Interacts with the pro-C3-convertase enzyme complex (C3b-Bb) comprised of Complement C3 beta chain (C3b) and the Complement factor B Bb fragment (Bb), where it binds (via its TSP type-1 5 domain) with C3b and Bb. This interaction stabilizes the complex and allows it to become the active C3-convertase enzyme complex (C3b-Bb-FP). Interacts with C3b. Interacts with CFB.

The protein localises to the secreted. In terms of biological role, a positive regulator of the alternate pathway (AP) of complement. It binds to and stabilizes the C3- and C5-convertase enzyme complexes. Inhibits CFI-CFH mediated degradation of Complement C3 beta chain (C3b). The chain is Properdin from Homo sapiens (Human).